The following is a 785-amino-acid chain: Protein PHTF2 (785 aa).

Positions 46-191 constitute a PHTF domain; the sequence is IQCLIGAYDQ…VHCQIVSTRT (146 aa). The next 2 helical transmembrane spans lie at 136–156 and 164–184; these read VIFF…VLFC and IPLT…TVHC. 2 disordered regions span residues 190–239 and 304–401; these read RTPK…GTST and RPEE…PESE. A compositionally biased stretch (basic residues) spans 200–209; it reads GKRRRKLRKA. The segment covering 210–219 has biased composition (basic and acidic residues); that stretch reads AHLEVHREGD. 2 stretches are compositionally biased toward polar residues: residues 220–239 and 309–333; these read GSST…GTST and AWNT…VSDE. An N-linked (GlcNAc...) asparagine glycan is attached at Asn329. Over residues 359-369 the composition is skewed to basic residues; sequence RNRKSHHYKKH. Over residues 378–390 the composition is skewed to low complexity; sequence SGTSCSSRCSSSR. A compositionally biased stretch (basic and acidic residues) spans 391-400; the sequence is QDSESARPES. The next 4 helical transmembrane spans lie at 497–517, 553–573, 634–654, and 668–688; these read IGYQ…PFVF, VIIS…LLCV, VIVS…CAQL, and WELV…VTLG. 2 N-linked (GlcNAc...) asparagine glycosylation sites follow: Asn697 and Asn756. Residues 760-780 form a helical membrane-spanning segment; sequence VVILSAVSGVISDLLGFNLKL.

Its subcellular location is the membrane. This Homo sapiens (Human) protein is Protein PHTF2 (PHTF2).